The chain runs to 239 residues: Ribosomal RNA small subunit methyltransferase G (239 aa).

Residues G79, F84, 130–131 (AE), and R149 contribute to the S-adenosyl-L-methionine site.

The protein belongs to the methyltransferase superfamily. RNA methyltransferase RsmG family.

The protein localises to the cytoplasm. Its function is as follows. Specifically methylates the N7 position of a guanine in 16S rRNA. In Pelotomaculum thermopropionicum (strain DSM 13744 / JCM 10971 / SI), this protein is Ribosomal RNA small subunit methyltransferase G.